The chain runs to 357 residues: UPF0283 membrane protein BAbS19_I09770 (357 aa).

Positions 1-36 (MSDKTPRKPTAFRLEQPARVSAASEQEEPRRPRAVK) are disordered. The span at 27–36 (EEPRRPRAVK) shows a compositional bias: basic and acidic residues. The next 2 helical transmembrane spans lie at 78-98 (ILFG…TEDL) and 109-129 (LGWT…AIIL).

This sequence belongs to the UPF0283 family.

It localises to the cell inner membrane. This is UPF0283 membrane protein BAbS19_I09770 from Brucella abortus (strain S19).